We begin with the raw amino-acid sequence, 159 residues long: Na(+)/H(+) antiporter subunit E1 (159 aa).

A run of 4 helical transmembrane segments spans residues 1-21 (MAVQ…VTNS), 27-47 (FVLG…VLPG), 49-69 (FYVI…IELI), and 101-121 (WQIV…VLGV).

It belongs to the CPA3 antiporters (TC 2.A.63) subunit E family. May form a heterooligomeric complex that consists of seven subunits: mnhA1, mnhB1, mnhC1, mnhD1, mnhE1, mnhF1 and mnhG1.

The protein resides in the cell membrane. In terms of biological role, mnh complex is a Na(+)/H(+) antiporter involved in Na(+) excretion. The chain is Na(+)/H(+) antiporter subunit E1 (mnhE1) from Staphylococcus aureus (strain bovine RF122 / ET3-1).